A 237-amino-acid chain; its full sequence is Uridylate kinase (237 aa).

K12–G15 is an ATP binding site. Positions G20 to G25 are involved in allosteric activation by GTP. G54 serves as a coordination point for UMP. ATP-binding residues include G55 and R59. UMP-binding positions include D74 and T135 to T142. Residues T162, Y168, and D171 each contribute to the ATP site.

This sequence belongs to the UMP kinase family. In terms of assembly, homohexamer.

The protein resides in the cytoplasm. The catalysed reaction is UMP + ATP = UDP + ADP. The protein operates within pyrimidine metabolism; CTP biosynthesis via de novo pathway; UDP from UMP (UMPK route): step 1/1. With respect to regulation, allosterically activated by GTP. Inhibited by UTP. In terms of biological role, catalyzes the reversible phosphorylation of UMP to UDP. In Haemophilus influenzae (strain PittEE), this protein is Uridylate kinase.